Here is a 97-residue protein sequence, read N- to C-terminus: Large ribosomal subunit protein bL27 (97 aa).

Residues 1–23 (MAHKKGASSSRNGRDSTSKRLGV) are disordered.

This sequence belongs to the bacterial ribosomal protein bL27 family.

This Acidothermus cellulolyticus (strain ATCC 43068 / DSM 8971 / 11B) protein is Large ribosomal subunit protein bL27.